Here is a 300-residue protein sequence, read N- to C-terminus: Ecto-ADP-ribosyltransferase 4 (300 aa).

A signal peptide spans 1–23; it reads MALWLPGGQLTLLLLLWVQQTPA. Topologically, residues 24 to 269 are extracellular; it reads GSTEAPLKVD…QLLKACSKKC (246 aa). Cystine bridges form between C48–C259 and C161–C210. Residues 70-255 form the TR mART core domain; that stretch reads KYYSRAWQKA…INLRSAGNMS (186 aa). 2 N-linked (GlcNAc...) asparagine glycosylation sites follow: N110 and N157. Q185 contacts NAD(+). A glycan (N-linked (GlcNAc...) asparagine) is linked at N201. Residue S219 coordinates NAD(+). The N-linked (GlcNAc...) asparagine glycan is linked to N253. A264 is lipidated: GPI-anchor amidated alanine. A propeptide spans 265-300 (removed in mature form); that stretch reads CSKKCAPAPVVIGCLFLVTVVISSKSRAQRNLLAPF. A helical transmembrane segment spans residues 270–286; that stretch reads APAPVVIGCLFLVTVVI. Residues 287-300 lie on the Cytoplasmic side of the membrane; that stretch reads SSKSRAQRNLLAPF.

It belongs to the Arg-specific ADP-ribosyltransferase family.

Its subcellular location is the membrane. It localises to the cell membrane. It catalyses the reaction L-arginyl-[protein] + NAD(+) = N(omega)-(ADP-D-ribosyl)-L-arginyl-[protein] + nicotinamide + H(+). The sequence is that of Ecto-ADP-ribosyltransferase 4 (Art4) from Mus musculus (Mouse).